An 878-amino-acid polypeptide reads, in one-letter code: MDRTFYEGWLIKSPPTKRIWRARWRRRYFTLKQGEIPEQFCLEYYTDHNCRKLKGVIDLDQCEQVDCGLRLENRKQKFQYMFDIKTPKRTYYLAAETEADMRDWVNCICQVCHLHDTKQSNELPLGAVGADENRTQHTSSSGGLSNSTQNTTTTSLHSSAGTTAPQASVPNAGGSAQLRRPAVIEEQPMPSNAGNNNSDSVYVNTEYSNRETMLCDANFDQQELLSAAQQQPPPSPATALYLNHSALIQAQAAAAAAEQLQQQQQQAARLAVSANGVVRKLPEHLVLTQQTLAEAAAQQHSSVQASPALSTASGPYIPISECFSGSPRFLPGVPLPGADLAIPNNPTTPLNNLDPKFYDTPRSHNNIGLNLTNDQSYSPKITNLSLQQLANNNASKQRSDSDSESVFTDDDEWAHPLPLRENVDRSTRPSDSSIENESFVLTYSQRFSKMPEEGGAIVPPAEKSSKLAGAASLPEAGDQGTLDKLAKVLKNKNNLILDFKENEKIPRDLPQLSDTENTSPAIVARRNAHSAFIEESYDIPRSHQQPYYNVNQLLGERPVTSPHNSNPIAASTPNLMAADLGAVAAISAAANPGLMGEAQAVASSPTSARTLPRHCYTNAAPTKMEGNVFRYDFMEQADCPPVNRKLKPKVAGGLPVVEDKPPEEFPAKPPVGVDQLTNKLGAAQLQQPIGPPSVDRKCKPNAYKLGNSATMSPATRRSSGAPLSMVLPHETDVHSPAAANAFFHETRTLPRQQHRHHPNSPGSMSVQHQRTASAAAAMMSLTAAAAPKQQAAAQTEHKLQYFDLDVTNKPPLLNRSSMSVGNLYSQGGNGASGMRFAGVEAGGARAPVPSSVVYRSVDFVKTEAFKRIREERESSGNK.

The PH domain maps to 3–113 (RTFYEGWLIK…WVNCICQVCH (111 aa)). A disordered region spans residues 132–176 (ENRTQHTSSSGGLSNSTQNTTTTSLHSSAGTTAPQASVPNAGGSA). Over residues 136–159 (QHTSSSGGLSNSTQNTTTTSLHSS) the composition is skewed to low complexity. The segment covering 160–169 (AGTTAPQASV) has biased composition (polar residues). Positions 246–275 (ALIQAQAAAAAAEQLQQQQQQAARLAVSAN) form a coiled coil. The tract at residues 391–437 (NNNASKQRSDSDSESVFTDDDEWAHPLPLRENVDRSTRPSDSSIENE) is disordered. S399 carries the post-translational modification Phosphoserine. At T481 the chain carries Phosphothreonine. Interaction with DRK stretches follow at residues 638–650 (DCPP…KPKV) and 690–702 (GPPS…KPNA). Disordered regions lie at residues 686–721 (QQPI…SSGA) and 749–773 (LPRQ…RTAS). Composition is skewed to polar residues over residues 707–718 (NSATMSPATRRS) and 760–770 (SPGSMSVQHQR). Phosphothreonine is present on T771. Phosphotyrosine is present on residues Y801 and Y854.

Interacts with DRK. Phosphorylated on Tyr-801 and Tyr-854 in response to sevenless activation, which initiates the recruitment of the phosphatase CSW.

Its subcellular location is the cytoplasm. The protein localises to the membrane. Functionally, essential component for signaling from various receptor tyrosine kinases such as Sevenless, TORSO and DER. Required for photoreceptor cell and wing development. The polypeptide is Protein daughter of sevenless (dos) (Drosophila melanogaster (Fruit fly)).